Here is a 480-residue protein sequence, read N- to C-terminus: UDP-glycosyltransferase 72B2 (480 aa).

UDP-alpha-D-glucose contacts are provided by residues Ser-277, 347-349 (APQ), 364-372 (HCGWNSTLE), and 386-389 (FAEQ).

The protein belongs to the UDP-glycosyltransferase family.

The protein is UDP-glycosyltransferase 72B2 (UGT72B2) of Arabidopsis thaliana (Mouse-ear cress).